Reading from the N-terminus, the 6199-residue chain is Adhesion G-protein coupled receptor V1 (6199 aa).

A signal peptide spans 1-23 (MPAVLALSGLLLMLLTVSVRSES). Calx-beta domains are found at residues 24–109 (AELR…VFIL), 126–230 (ATIT…VQLT), 249–355 (ISRN…QVVL), 380–480 (DKPY…LKLI), 637–737 (PDIA…ILTL), 753–853 (SREI…VVLS), 869–972 (NITV…ITLL), 997–1083 (IYFA…YIVL), 1099–1199 (TVVI…LRLM), 1434–1534 (PIPG…FYLQ), 1563–1655 (GLFS…RVRL), 1835–1937 (IIVT…VRLT), 1963–2063 (LFVF…FLEL), 2092–2190 (QVII…RIEL), 2208–2308 (ITIL…KVEL), 2425–2525 (AAFC…FIIK), 2582–2659 (VREE…QIGL), 2673–2773 (DTVT…RVIL), 2814–2908 (PSSL…LVNI), 2931–3029 (EIII…QLIL), and 3054–3154 (GHGI…TVTL). Residues 24 to 5803 (AELRFQGQTQ…IESLASFNEA (5780 aa)) lie on the Extracellular side of the membrane. EAR repeat units follow at residues 3239 to 3284 (VLAV…KWQG), 3285 to 3333 (VFVP…RVQA), 3336 to 3372 (NLTLEQTFSVSGFSVKHFSTDLKQYLIASSEIFVWNR), 3374 to 3420 (SFFL…QWTD), 3422 to 3467 (RFQN…LWGS), and 3471 to 3513 (VFQQ…SWRS). Calx-beta domains lie at 3562-3605 (SNQS…RVSL), 3619-3719 (QVTF…TIVL), 3778-3854 (ITLS…FVNI), 3916-3985 (VLRL…MVKL), 4000-4103 (VVVS…IQLL), 4120-4220 (VVIR…QLRL), 4247-4335 (HGLF…FLNI), 4371-4471 (VIIQ…LQLT), 4493-4593 (DSPN…IIML), 4615-4715 (KFGD…TLRL), 4993-5076 (QHLV…VNLT), 5125-5225 (SEDS…IYLS), and 5260-5360 (VGFS…LVEV). The GAIN-B domain maps to 5636–5801 (PYFTIAAHHW…AEIESLASFN (166 aa)). Disulfide bonds link C5751–C5780 and C5768–C5782. The tract at residues 5751 to 5801 (CLLWNQAAESWLSDGQFCRLVDDTQNYVECACSHLSIYTAYAEIESLASFN) is GPS. A helical membrane pass occupies residues 5804-5824 (FYAAGFICISGFALAMVSHLM). At 5825 to 5834 (CARFLMFAAK) the chain is on the cytoplasmic side. The helical transmembrane segment at 5835 to 5855 (LLTHMMVACLGTQICFLVSAF) threads the bilayer. The Extracellular segment spans residues 5856–5864 (RGRMFSEDS). A helical transmembrane segment spans residues 5865–5885 (CAALGLFFHYFHLSQFGWMLV). The Cytoplasmic segment spans residues 5886-5908 (QAINFWQILVMNDEHTERRYLLY). Residues 5909–5929 (FLLSWGLPALVIIVLVVVLLG) form a helical membrane-spanning segment. Residues 5930-5954 (GFGWSIHSVYGLVQGDLCFIPNVYA) are Extracellular-facing. Residues 5955–5975 (ALCTAALVPLICLVGVLVIFI) traverse the membrane as a helical segment. At 5976–6001 (HAYQVTQQWKAYDDIYRGRTNSSEVP) the chain is on the cytoplasmic side. Residues 6002-6022 (MMLYLFALVTLVCVWAGLHMA) form a helical membrane-spanning segment. The Extracellular segment spans residues 6023–6025 (YRY). The helical transmembrane segment at 6026–6046 (IWMLILLVIFNIFLGLYVFSV) threads the bilayer. Over 6047–6199 (YFVMHNQLFW…RRIPIADTHL (153 aa)) the chain is Cytoplasmic.

It belongs to the G-protein coupled receptor 2 family. Adhesion G-protein coupled receptor (ADGR) subfamily. Heterodimer of 2 chains generated by proteolytic processing; the large extracellular N-terminal fragment and the membrane-bound C-terminal fragment predominantly remain associated and non-covalently linked. Autoproteolytically processed at the GPS region of the GAIN-B domain; this cleavage modulates receptor activity.

The protein localises to the cell membrane. The protein resides in the cell projection. Its subcellular location is the stereocilium membrane. It is found in the photoreceptor inner segment. In terms of biological role, receptor that may have an important role in the development of the sensory nervous system. The polypeptide is Adhesion G-protein coupled receptor V1 (adgrv1) (Danio rerio (Zebrafish)).